We begin with the raw amino-acid sequence, 363 residues long: dTDP-L-rhamnose 4-epimerase (363 aa).

Residues 18–24 (GGAGFIG), 68–69 (DV), and 90–94 (LAAET) each bind NAD(+). Positions 136 and 191 each coordinate substrate. Residues Y191 and K195 each coordinate NAD(+). Y191 (proton acceptor) is an active-site residue. Positions 220 and 259 each coordinate substrate.

This sequence belongs to the NAD(P)-dependent epimerase/dehydratase family. It depends on NAD(+) as a cofactor.

It catalyses the reaction dTDP-6-deoxy-beta-L-talose = dTDP-beta-L-rhamnose. It functions in the pathway bacterial outer membrane biogenesis; LPS O-antigen biosynthesis. Its function is as follows. Catalyzes the interconvertion of dTDP-6-deoxy-L-talose and dTDP-L-rhamnose. The equilibrium is strongly toward dTDP-L-rhamnose. The sequence is that of dTDP-L-rhamnose 4-epimerase (wbiB) from Burkholderia thailandensis (strain ATCC 700388 / DSM 13276 / CCUG 48851 / CIP 106301 / E264).